We begin with the raw amino-acid sequence, 198 residues long: Protein GrpE (198 aa).

The protein belongs to the GrpE family. Homodimer.

The protein localises to the cytoplasm. Its function is as follows. Participates actively in the response to hyperosmotic and heat shock by preventing the aggregation of stress-denatured proteins, in association with DnaK and GrpE. It is the nucleotide exchange factor for DnaK and may function as a thermosensor. Unfolded proteins bind initially to DnaJ; upon interaction with the DnaJ-bound protein, DnaK hydrolyzes its bound ATP, resulting in the formation of a stable complex. GrpE releases ADP from DnaK; ATP binding to DnaK triggers the release of the substrate protein, thus completing the reaction cycle. Several rounds of ATP-dependent interactions between DnaJ, DnaK and GrpE are required for fully efficient folding. This Actinobacillus pleuropneumoniae serotype 7 (strain AP76) protein is Protein GrpE.